Consider the following 328-residue polypeptide: Lipoyl synthase (328 aa).

Residues Cys-56, Cys-61, Cys-67, Cys-82, Cys-86, Cys-89, and Ser-293 each coordinate [4Fe-4S] cluster. Positions 68–282 constitute a Radical SAM core domain; it reads WEDREATFLI…ERVGAELGFS (215 aa).

This sequence belongs to the radical SAM superfamily. Lipoyl synthase family. [4Fe-4S] cluster serves as cofactor.

The protein resides in the cytoplasm. It catalyses the reaction [[Fe-S] cluster scaffold protein carrying a second [4Fe-4S](2+) cluster] + N(6)-octanoyl-L-lysyl-[protein] + 2 oxidized [2Fe-2S]-[ferredoxin] + 2 S-adenosyl-L-methionine + 4 H(+) = [[Fe-S] cluster scaffold protein] + N(6)-[(R)-dihydrolipoyl]-L-lysyl-[protein] + 4 Fe(3+) + 2 hydrogen sulfide + 2 5'-deoxyadenosine + 2 L-methionine + 2 reduced [2Fe-2S]-[ferredoxin]. It participates in protein modification; protein lipoylation via endogenous pathway; protein N(6)-(lipoyl)lysine from octanoyl-[acyl-carrier-protein]: step 2/2. Functionally, catalyzes the radical-mediated insertion of two sulfur atoms into the C-6 and C-8 positions of the octanoyl moiety bound to the lipoyl domains of lipoate-dependent enzymes, thereby converting the octanoylated domains into lipoylated derivatives. The polypeptide is Lipoyl synthase (Frankia alni (strain DSM 45986 / CECT 9034 / ACN14a)).